The primary structure comprises 127 residues: Insulin-like growth factor 3.L (127 aa).

The N-terminal stretch at 1-49 is a signal peptide; that stretch reads MPVTAMCLQDSKKLKKAKLTRKKVTPFPFSRMVLCLSLVFTLYVEATNA. The interval 49 to 80 is b; that stretch reads ARCLRPRSKELLCGSELVDILQFICGPTGFYV. 3 disulfide bridges follow: cysteine 61–cysteine 99, cysteine 73–cysteine 112, and cysteine 98–cysteine 103. Positions 81-92 are c; that stretch reads SKGASFRNRNRP. An a region spans residues 93–113; that stretch reads GIVEECCFCGCSVAILESYCA. A d region spans residues 114–121; that stretch reads APVTNFTG. Residues 122 to 127 constitute a propeptide, e peptide; the sequence is REEQKS.

This sequence belongs to the insulin family.

The protein localises to the secreted. In terms of biological role, the insulin-like growth factors, isolated from plasma, are structurally and functionally related to insulin but have a much higher growth-promoting activity. Promotes anterior neural development. This Xenopus laevis (African clawed frog) protein is Insulin-like growth factor 3.L.